A 247-amino-acid chain; its full sequence is MSAPDSPALAGMSIGAVLDLLRPDFPDVTISKIRFLEAEGLVTPRRASSGYRRFTAYDCARLRFILTAQRDHYLPLKVIRAQLDAQPDGELPPFGSPYVLPRLVPVAGDSAGGVGSDTASVSLTGIRLSREDLLERSEVADELLTALLKAGVITTGPGGFFDEHAVVILQCARALAEYGVEPRHLRAFRSAADRQSDLIAQIAGPLVKAGKAGARDRADDLAREVAALAITLHTSLIKSAVRDVLHR.

The 75-residue stretch at 11–85 (GMSIGAVLDL…LKVIRAQLDA (75 aa)) folds into the HTH merR-type domain. The H-T-H motif DNA-binding region spans 14–38 (IGAVLDLLRPDFPDVTISKIRFLEA).

Homodimer.

In terms of biological role, transcriptional regulator that binds to its own promoter and thus may play a role in the regulation of the cotranscribed genes Rv1827 and Rv1828. Can also bind several promoter regions of genes that are essential, including ftsZ. Binds to the imperfect everted repeat sequence CTCAA through its winged-HTH motif. This is an uncharacterized protein from Mycobacterium tuberculosis (strain ATCC 25618 / H37Rv).